We begin with the raw amino-acid sequence, 303 residues long: D-alanine--D-alanine ligase (303 aa).

The ATP-grasp domain maps to K100–E295. G127–T180 is a binding site for ATP. Residues D249, E262, and N264 each contribute to the Mg(2+) site.

The protein belongs to the D-alanine--D-alanine ligase family. Mg(2+) is required as a cofactor. Requires Mn(2+) as cofactor.

It is found in the cytoplasm. It carries out the reaction 2 D-alanine + ATP = D-alanyl-D-alanine + ADP + phosphate + H(+). It participates in cell wall biogenesis; peptidoglycan biosynthesis. Its function is as follows. Cell wall formation. The chain is D-alanine--D-alanine ligase from Nitratidesulfovibrio vulgaris (strain DP4) (Desulfovibrio vulgaris).